A 106-amino-acid chain; its full sequence is Large ribosomal subunit protein uL24 (106 aa).

The protein belongs to the universal ribosomal protein uL24 family. Part of the 50S ribosomal subunit.

Functionally, one of two assembly initiator proteins, it binds directly to the 5'-end of the 23S rRNA, where it nucleates assembly of the 50S subunit. One of the proteins that surrounds the polypeptide exit tunnel on the outside of the subunit. The chain is Large ribosomal subunit protein uL24 from Acidiphilium cryptum (strain JF-5).